Reading from the N-terminus, the 573-residue chain is CTP synthase (573 aa).

The interval M1–L281 is amidoligase domain. S23 is a binding site for CTP. S23 serves as a coordination point for UTP. Residues S24–L29 and D81 each bind ATP. Positions 81 and 155 each coordinate Mg(2+). Residues D162–E164, K202–Q207, and K238 each bind CTP. UTP is bound by residues K202–Q207 and K238. One can recognise a Glutamine amidotransferase type-1 domain in the interval E306–A554. G369 is a binding site for L-glutamine. The Nucleophile; for glutamine hydrolysis role is filled by C396. Residues L397–Q400, E419, and R480 contribute to the L-glutamine site. Residues H527 and E529 contribute to the active site.

It belongs to the CTP synthase family. As to quaternary structure, homotetramer.

It carries out the reaction UTP + L-glutamine + ATP + H2O = CTP + L-glutamate + ADP + phosphate + 2 H(+). It catalyses the reaction L-glutamine + H2O = L-glutamate + NH4(+). The catalysed reaction is UTP + NH4(+) + ATP = CTP + ADP + phosphate + 2 H(+). It participates in pyrimidine metabolism; CTP biosynthesis via de novo pathway; CTP from UDP: step 2/2. Allosterically activated by GTP, when glutamine is the substrate; GTP has no effect on the reaction when ammonia is the substrate. The allosteric effector GTP functions by stabilizing the protein conformation that binds the tetrahedral intermediate(s) formed during glutamine hydrolysis. Inhibited by the product CTP, via allosteric rather than competitive inhibition. In terms of biological role, catalyzes the ATP-dependent amination of UTP to CTP with either L-glutamine or ammonia as the source of nitrogen. Regulates intracellular CTP levels through interactions with the four ribonucleotide triphosphates. The protein is CTP synthase of Nocardia farcinica (strain IFM 10152).